A 29-amino-acid polypeptide reads, in one-letter code: uncharacterized protein (29 aa).

It localises to the plastid. Its subcellular location is the chloroplast. This is an uncharacterized protein from Trieres chinensis (Marine centric diatom).